Reading from the N-terminus, the 381-residue chain is MNKATANERKKLRLLLVASRKHLSRGDLRSLIRFLESEDCGFEIKLQFSDPKEQPELLELHRLVAIPALIKLDPQPKQIFAGTSILEQLKNWLPRWEQEDILISSGLGINLRQKESENGRTRNELLLEDENLVLRQENETLSNQIESQERLLRMVAHELRTPLSAAKLALQSQALGQIDLIKLQEVVKRRLEEIESLSKDLLEVGTTRWEALFNPQEANLANIAAEVILELEKFWLSRGIGINTDIPADLPNVFADQSRMKQVLLNLIENALKFSNDGDTVEITMLHRTNQWVQISVSDKGPGIPEEEQQRIFLDRVRLPQTSNETSGFGIGLSVCRRIVEVHGGKIWVVSQPGEGSCFYFTVPVWDKRNKSLEPLTLTQG.

The Histidine kinase domain maps to 154-367 (MVAHELRTPL…CFYFTVPVWD (214 aa)). Histidine 157 carries the post-translational modification Phosphohistidine; by autocatalysis.

Homooligomerizes. Interacts with KaiC. Participates in the KaiBC complex, whose core is composed of a KaiC homohexamer and 6 KaiB.

The catalysed reaction is ATP + protein L-histidine = ADP + protein N-phospho-L-histidine.. Its function is as follows. Member of the two-component regulatory system SasA/RpaA involved in genome-wide circadian gene expression. One of several clock output pathways. Participates in the Kai clock protein complex, the main circadian regulator in cyanobacteria, via its interaction with KaiC. KaiC enhances the autophosphorylation activity of SasA, which then transfers its phosphate group to RpaA to activate it. In addition to its output function, recruits fold-shifted KaiB (KaiB(fs)) to KaiC to cooperatively form the KaiB(6):KaiC(6) complex (independent of SasA kinase activity). Required for robustness of the circadian rhythm of gene expression and is involved in clock output, also required for adaptation to light/dark cycles. The sequence is that of Adaptive-response sensory kinase SasA from Prochlorococcus marinus (strain SARG / CCMP1375 / SS120).